A 273-amino-acid chain; its full sequence is Phosphate import ATP-binding protein PstB (273 aa).

One can recognise an ABC transporter domain in the interval 26-268 (MRGEKVCVFY…PTEKRTQDYI (243 aa)). 58–65 (GPSGCGKS) contacts ATP.

Belongs to the ABC transporter superfamily. Phosphate importer (TC 3.A.1.7) family. In terms of assembly, the complex is composed of two ATP-binding proteins (PstB), two transmembrane proteins (PstC and PstA) and a solute-binding protein (PstS).

It is found in the cell inner membrane. It carries out the reaction phosphate(out) + ATP + H2O = ADP + 2 phosphate(in) + H(+). Functionally, part of the ABC transporter complex PstSACB involved in phosphate import. Responsible for energy coupling to the transport system. This chain is Phosphate import ATP-binding protein PstB, found in Brucella abortus (strain 2308).